A 51-amino-acid polypeptide reads, in one-letter code: Large ribosomal subunit protein eL39 (51 aa).

It belongs to the eukaryotic ribosomal protein eL39 family.

The chain is Large ribosomal subunit protein eL39 (RpL39) from Plutella xylostella (Diamondback moth).